Reading from the N-terminus, the 660-residue chain is Peroxisomal acyl-coenzyme A oxidase 1 (660 aa).

A Phosphoserine modification is found at Ser26. N6-succinyllysine is present on residues Lys89 and Lys90. Residues Thr139 and Gly178 each contribute to the FAD site. Residue Lys216 is modified to N6-acetyllysine. Lys241 is subject to N6-succinyllysine. Lys255, Lys267, and Lys272 each carry N6-acetyllysine. Lys349 is modified (N6-succinyllysine). Glu421 acts as the Proton acceptor in catalysis. An N6-acetyllysine; alternate mark is found at Lys437 and Lys446. An N6-succinyllysine; alternate mark is found at Lys437 and Lys446. N6-acetyllysine is present on residues Lys500 and Lys504. Position 512 is an N6-acetyllysine; alternate (Lys512). An N6-succinyllysine; alternate modification is found at Lys512. At Lys542 the chain carries N6-succinyllysine. Lys637 is modified (N6-acetyllysine; alternate). Lys637 carries the N6-succinyllysine; alternate modification. An N6-succinyllysine modification is found at Lys643. A Phosphoserine modification is found at Ser649. Residue Lys651 is modified to N6-acetyllysine. Position 654 is an N6-succinyllysine (Lys654). Positions 658 to 660 (SKL) match the Microbody targeting signal motif.

It belongs to the acyl-CoA oxidase family. Homodimer. Interacts with LONP2. FAD is required as a cofactor. In terms of tissue distribution, widely expressed with highest levels of isoform 1 and isoform 2 detected in testis. Isoform 1 is expressed at higher levels than isoform 2 in liver and kidney while isoform 2 levels are higher in brain, lung, muscle, white adipose tissue and testis. Levels are almost equal in heart.

The protein localises to the peroxisome. The enzyme catalyses a 2,3-saturated acyl-CoA + O2 = a (2E)-enoyl-CoA + H2O2. It carries out the reaction hexadecanoyl-CoA + O2 = (2E)-hexadecenoyl-CoA + H2O2. The catalysed reaction is dodecanoyl-CoA + O2 = (2E)-dodecenoyl-CoA + H2O2. It catalyses the reaction octanoyl-CoA + O2 = (2E)-octenoyl-CoA + H2O2. The enzyme catalyses decanoyl-CoA + O2 = (2E)-decenoyl-CoA + H2O2. It carries out the reaction tetradecanoyl-CoA + O2 = (2E)-tetradecenoyl-CoA + H2O2. The catalysed reaction is hexadecanedioyl-CoA + O2 = (2E)-hexadecenedioyl-CoA + H2O2. It catalyses the reaction (5Z,8Z,11Z,14Z,17Z)-eicosapentaenoyl-CoA + O2 = (2E,5Z,8Z,11Z,14Z,17Z)-icosahexaenoyl-CoA + H2O2. The enzyme catalyses tetracosanoyl-CoA + O2 = (2E)-tetracosenoyl-CoA + H2O2. It carries out the reaction glutaryl-CoA + O2 = (2E)-glutaconyl-CoA + H2O2. The catalysed reaction is hexanoyl-CoA + O2 = (2E)-hexenoyl-CoA + H2O2. It catalyses the reaction octadecanoyl-CoA + O2 = (2E)-octadecenoyl-CoA + H2O2. The enzyme catalyses (6Z,9Z,12Z,15Z,18Z,21Z)-tetracosahexaenoyl-CoA + O2 = (2E,6Z,9Z,12Z,15Z,18Z,21Z)-tetracosaheptaenoyl-CoA + H2O2. Its pathway is lipid metabolism; peroxisomal fatty acid beta-oxidation. Its function is as follows. Involved in the initial and rate-limiting step of peroxisomal beta-oxidation of straight-chain saturated and unsaturated very-long-chain fatty acids. Catalyzes the desaturation of fatty acyl-CoAs such as palmitoyl-CoA (hexadecanoyl-CoA) to 2-trans-enoyl-CoAs ((2E)-enoyl-CoAs) such as (2E)-hexadecenoyl-CoA, and donates electrons directly to molecular oxygen (O(2)), thereby producing hydrogen peroxide (H(2)O(2)). Shows highest activity against medium-chain fatty acyl-CoAs. Shows optimum activity with a chain length of 10 carbons (decanoyl-CoA) in vitro. In terms of biological role, is active against a much broader range of substrates and shows activity towards long-chain fatty acyl-CoAs. This chain is Peroxisomal acyl-coenzyme A oxidase 1, found in Homo sapiens (Human).